The sequence spans 173 residues: Alpha-crystallin A chain (173 aa).

Position 1 is an N-acetylmethionine (Met1). A required for complex formation with BFSP1 and BFSP2 region spans residues 1–63 (MDVTIQHPWF…RTVLDSGISE (63 aa)). Residue Gln6 is modified to Deamidated glutamine; partial. A Phosphoserine modification is found at Ser45. Gln50 is modified (deamidated glutamine; partial). The sHSP domain occupies 52 to 162 (LFRTVLDSGI…GHSERAIPVS (111 aa)). N6-acetyllysine occurs at positions 70 and 99. Residue His100 participates in Zn(2+) binding. Asn101 is subject to Deamidated asparagine; partial. 2 residues coordinate Zn(2+): Glu102 and His107. The residue at position 122 (Ser122) is a Phosphoserine. Asn123 carries the post-translational modification Deamidated asparagine; partial. Residues 145-173 (KVQSGLDAGHSERAIPVSREEKPSSAPSS) form a disordered region. Position 147 is a deamidated glutamine; partial (Gln147). Positions 153–167 (GHSERAIPVSREEKP) are enriched in basic and acidic residues. His154 provides a ligand contact to Zn(2+). Ser162 carries O-linked (GlcNAc) serine glycosylation.

The protein belongs to the small heat shock protein (HSP20) family. Heteromer composed of three CRYAA and one CRYAB subunits. Inter-subunit bridging via zinc ions enhances stability, which is crucial as there is no protein turn over in the lens. Can also form homodimers and homotetramers (dimers of dimers) which serve as the building blocks of homooligomers. Within homooligomers, the zinc-binding motif is created from residues of 3 different molecules. His-100 and Glu-102 from one molecule are ligands of the zinc ion, and His-107 and His-154 residues from additional molecules complete the site with tetrahedral coordination geometry. Part of a complex required for lens intermediate filament formation composed of BFSP1, BFSP2 and CRYAA. In terms of processing, acetylation at Lys-70 may increase chaperone activity. Post-translationally, undergoes age-dependent proteolytical cleavage at the C-terminus.

Its subcellular location is the cytoplasm. It localises to the nucleus. In terms of biological role, contributes to the transparency and refractive index of the lens. Acts as a chaperone, preventing aggregation of various proteins under a wide range of stress conditions. Required for the correct formation of lens intermediate filaments as part of a complex composed of BFSP1, BFSP2 and CRYAA. This Meriones unguiculatus (Mongolian jird) protein is Alpha-crystallin A chain (CRYAA).